The sequence spans 92 residues: MAKEELIQFEGLVTEILPDARYRVQLDTGHEIVAYTAGKMKKNRIKTLAGDRVTVEMSPYDLEKGRLIFRHKDERPGGPPRSGPPRGQFRRR.

The region spanning 1-72 (MAKEELIQFE…EKGRLIFRHK (72 aa)) is the S1-like domain. The tract at residues 69–92 (FRHKDERPGGPPRSGPPRGQFRRR) is disordered.

This sequence belongs to the IF-1 family. In terms of assembly, component of the 30S ribosomal translation pre-initiation complex which assembles on the 30S ribosome in the order IF-2 and IF-3, IF-1 and N-formylmethionyl-tRNA(fMet); mRNA recruitment can occur at any time during PIC assembly.

It localises to the cytoplasm. In terms of biological role, one of the essential components for the initiation of protein synthesis. Stabilizes the binding of IF-2 and IF-3 on the 30S subunit to which N-formylmethionyl-tRNA(fMet) subsequently binds. Helps modulate mRNA selection, yielding the 30S pre-initiation complex (PIC). Upon addition of the 50S ribosomal subunit IF-1, IF-2 and IF-3 are released leaving the mature 70S translation initiation complex. The polypeptide is Translation initiation factor IF-1 (Rhodopseudomonas palustris (strain ATCC BAA-98 / CGA009)).